The following is an 86-amino-acid chain: Cell division protein ZapA (86 aa).

Belongs to the ZapA family. Type 2 subfamily. Homodimer. Interacts with FtsZ.

It is found in the cytoplasm. Activator of cell division through the inhibition of FtsZ GTPase activity, therefore promoting FtsZ assembly into bundles of protofilaments necessary for the formation of the division Z ring. It is recruited early at mid-cell but it is not essential for cell division. The protein is Cell division protein ZapA of Oceanobacillus iheyensis (strain DSM 14371 / CIP 107618 / JCM 11309 / KCTC 3954 / HTE831).